A 122-amino-acid chain; its full sequence is Large ribosomal subunit protein bL12 (122 aa).

This sequence belongs to the bacterial ribosomal protein bL12 family. As to quaternary structure, homodimer. Part of the ribosomal stalk of the 50S ribosomal subunit. Forms a multimeric L10(L12)X complex, where L10 forms an elongated spine to which 2 to 4 L12 dimers bind in a sequential fashion. Binds GTP-bound translation factors.

In terms of biological role, forms part of the ribosomal stalk which helps the ribosome interact with GTP-bound translation factors. Is thus essential for accurate translation. This is Large ribosomal subunit protein bL12 from Flavobacterium psychrophilum (strain ATCC 49511 / DSM 21280 / CIP 103535 / JIP02/86).